Reading from the N-terminus, the 463-residue chain is Phosphomannomutase/phosphoglucomutase (463 aa).

The active-site Phosphoserine intermediate is Ser108. Residues Ser108, Asp242, Asp244, and Asp246 each coordinate Mg(2+). Positions 325, 327, and 329 each coordinate substrate.

The protein belongs to the phosphohexose mutase family. As to quaternary structure, monomer. Mg(2+) is required as a cofactor.

It catalyses the reaction alpha-D-mannose 1-phosphate = D-mannose 6-phosphate. It carries out the reaction alpha-D-glucose 1-phosphate = alpha-D-glucose 6-phosphate. Its pathway is nucleotide-sugar biosynthesis; GDP-alpha-D-mannose biosynthesis; alpha-D-mannose 1-phosphate from D-fructose 6-phosphate: step 2/2. It participates in bacterial outer membrane biogenesis; lipopolysaccharide biosynthesis. In terms of biological role, the phosphomannomutase activity produces a precursor for alginate polymerization. The alginate layer causes a mucoid phenotype and provides a protective barrier against host immune defenses and antibiotics. Also involved in core-LPS biosynthesis due to its phosphoglucomutase activity. Essential for biofilm production. The protein is Phosphomannomutase/phosphoglucomutase (algC) of Pseudomonas putida (strain ATCC 47054 / DSM 6125 / CFBP 8728 / NCIMB 11950 / KT2440).